The chain runs to 341 residues: UDP-3-O-acylglucosamine N-acyltransferase (341 aa).

Catalysis depends on H242, which acts as the Proton acceptor.

The protein belongs to the transferase hexapeptide repeat family. LpxD subfamily. Homotrimer.

It catalyses the reaction a UDP-3-O-[(3R)-3-hydroxyacyl]-alpha-D-glucosamine + a (3R)-hydroxyacyl-[ACP] = a UDP-2-N,3-O-bis[(3R)-3-hydroxyacyl]-alpha-D-glucosamine + holo-[ACP] + H(+). It participates in bacterial outer membrane biogenesis; LPS lipid A biosynthesis. In terms of biological role, catalyzes the N-acylation of UDP-3-O-acylglucosamine using 3-hydroxyacyl-ACP as the acyl donor. Is involved in the biosynthesis of lipid A, a phosphorylated glycolipid that anchors the lipopolysaccharide to the outer membrane of the cell. The protein is UDP-3-O-acylglucosamine N-acyltransferase of Haemophilus influenzae (strain 86-028NP).